The sequence spans 130 residues: Small ribosomal subunit protein uS9 (130 aa).

Residues T105–K115 show a composition bias toward basic and acidic residues. Positions T105–R130 are disordered. The segment covering V116–R130 has biased composition (basic residues).

The protein belongs to the universal ribosomal protein uS9 family.

This chain is Small ribosomal subunit protein uS9, found in Buchnera aphidicola subsp. Schizaphis graminum (strain Sg).